The sequence spans 251 residues: Imidazole glycerol phosphate synthase subunit HisF (251 aa).

Residues Asp11 and Asp130 contribute to the active site.

It belongs to the HisA/HisF family. As to quaternary structure, heterodimer of HisH and HisF.

The protein resides in the cytoplasm. It carries out the reaction 5-[(5-phospho-1-deoxy-D-ribulos-1-ylimino)methylamino]-1-(5-phospho-beta-D-ribosyl)imidazole-4-carboxamide + L-glutamine = D-erythro-1-(imidazol-4-yl)glycerol 3-phosphate + 5-amino-1-(5-phospho-beta-D-ribosyl)imidazole-4-carboxamide + L-glutamate + H(+). It participates in amino-acid biosynthesis; L-histidine biosynthesis; L-histidine from 5-phospho-alpha-D-ribose 1-diphosphate: step 5/9. Its function is as follows. IGPS catalyzes the conversion of PRFAR and glutamine to IGP, AICAR and glutamate. The HisF subunit catalyzes the cyclization activity that produces IGP and AICAR from PRFAR using the ammonia provided by the HisH subunit. The polypeptide is Imidazole glycerol phosphate synthase subunit HisF (Metallosphaera sedula (strain ATCC 51363 / DSM 5348 / JCM 9185 / NBRC 15509 / TH2)).